A 146-amino-acid chain; its full sequence is Sordarin/hypoxysordarin biosynthesis cluster protein G (146 aa).

Its pathway is antibiotic biosynthesis. In terms of biological role, part of the gene cluster that mediates the biosynthesis of sordarin and hypoxysordarin, glycoside antibiotics with a unique tetracyclic diterpene aglycone structure. First, the geranylgeranyl diphosphate synthase sdnC constructs GGDP from farnesyl diphosphate and isopentenyl diphosphate. The diterpene cyclase sdnA then catalyzes the cyclization of GGDP to afford cycloaraneosene. Cycloaraneosene is then hydroxylated four times by the putative cytochrome P450 monooxygenases sdnB, sdnE, sdnF and sdnH to give a hydroxylated cycloaraneosene derivative such as cycloaraneosene-8,9,13,19-tetraol. Although the order of the hydroxylations is unclear, at least C8, C9 and C13 of the cycloaraneosene skeleton are hydroxylated before the sordaricin formation. Dehydration of the 13-hydroxy group of the hydroxylated cycloaraneosene derivative might be catalyzed by an unassigned hypothetical protein such as sdnG and sdnP to construct the cyclopentadiene moiety. The FAD-dependent oxidoreductase sdnN is proposed to catalyze the oxidation at C9 of the hydroxylated cycloaraneosene derivative and also catalyze the Baeyer-Villiger oxidation to give the lactone intermediate. The presumed lactone intermediate would be hydrolyzed to give an acrolein moiety and a carboxylate moiety. Then, [4+2]cycloaddition would occur between the acrolein moiety and the cyclopentadiene moiety to give sordaricin. SdnN might also be involved in the [4+2]cycloaddition after the hypothesized oxidation to accommodate the oxidized product and prompt the [4+2]cycloaddition. GDP-6-deoxy-D-altrose may be biosynthesized from GDP-D-mannose by the putative GDP-mannose-4,6-dehydratase sdnI and the short-chain dehydrogenase sdnK. The glycosyltransferase sdnJ catalyzes the attachment of 6-deoxy-D-altrose onto the 19-hydroxy group of sordaricin to give 4'-O-demethylsordarin. The methyltransferase sdnD would complete the biosynthesis of sordarin. Sordarin can be further modified into hypoxysordarin. The unique acyl chain at the 3'-hydroxy group of hypoxysordarin would be constructed by an iterative type I PKS sdnO and the trans-acting polyketide methyltransferase sdnL. SdnL would be responsible for the introduction of an alpha-methyl group of the polyketide chain. Alternatively, the beta-lactamase-like protein sdnR might be responsible for the cleavage and transfer of the polyketide chain from the PKS sdnO to sordarin. Two putative cytochrome P450 monooxygenases, sdnQ and sdnT, might catalyze the epoxidations of the polyketide chain to complete the biosynthesis of hypoxysordarin. Transcriptional regulators sdnM and sdnS are presumably encoded for the transcriptional regulation of the expression of the sdn gene cluster. This chain is Sordarin/hypoxysordarin biosynthesis cluster protein G, found in Sordaria araneosa (Pleurage araneosa).